The chain runs to 321 residues: ATP phosphoribosyltransferase regulatory subunit (321 aa).

The protein belongs to the class-II aminoacyl-tRNA synthetase family. HisZ subfamily. As to quaternary structure, heteromultimer composed of HisG and HisZ subunits.

Its subcellular location is the cytoplasm. The protein operates within amino-acid biosynthesis; L-histidine biosynthesis; L-histidine from 5-phospho-alpha-D-ribose 1-diphosphate: step 1/9. Required for the first step of histidine biosynthesis. May allow the feedback regulation of ATP phosphoribosyltransferase activity by histidine. The chain is ATP phosphoribosyltransferase regulatory subunit from Thiobacillus denitrificans (strain ATCC 25259 / T1).